We begin with the raw amino-acid sequence, 74 residues long: Turripeptide OL135 (74 aa).

Residues 1 to 20 (MKVPIVLMLVLLLIMPLSDG) form the signal peptide. A propeptide spanning residues 21–28 (YERKRXXX) is cleaved from the precursor.

It belongs to the conopeptide P-like superfamily. In terms of processing, contains 3 disulfide bonds. Expressed by the venom duct.

It is found in the secreted. Its function is as follows. Acts as a neurotoxin by inhibiting an ion channel. This Iotyrris olangoensis (Sea snail) protein is Turripeptide OL135.